A 329-amino-acid chain; its full sequence is Adenylate isopentenyltransferase 7, mitochondrial (329 aa).

Residues Met-1 to Met-40 constitute a mitochondrion transit peptide. An ATP-binding site is contributed by Gly-41–Ser-48.

It belongs to the IPP transferase family. Expressed in both the vascular stele and the phloem companion cells of the root, in endodermis of the root elongation zone, trichomes on young leaves, and some pollen tubes.

The protein localises to the mitochondrion. The enzyme catalyses dimethylallyl diphosphate + ADP = N(6)-(dimethylallyl)adenosine 5'-diphosphate + diphosphate. The catalysed reaction is dimethylallyl diphosphate + ATP = N(6)-(dimethylallyl)adenosine 5'-triphosphate + diphosphate. Its function is as follows. Involved in cytokinin biosynthesis. Catalyzes the transfer of an isopentenyl group from dimethylallyl diphosphate (DMAPP) to ATP and ADP. This is Adenylate isopentenyltransferase 7, mitochondrial (IPT7) from Arabidopsis thaliana (Mouse-ear cress).